A 1129-amino-acid polypeptide reads, in one-letter code: Serine/threonine-protein kinase LATS1 (1129 aa).

The segment covering 1–11 (MKRGEKPEGYR) has biased composition (basic and acidic residues). The interval 1–71 (MKRGEKPEGY…PRQVRNPPKF (71 aa)) is disordered. Positions 19–30 (PASNYPGSSRQM) are enriched in polar residues. Basic and acidic residues predominate over residues 46–64 (DASKAEHNLNKMSTEDPRQ). A UBA domain is found at 100 to 141 (EVNPQMFQDLQAAGFDEDMVIQALQKTNNRSIEAAVEFISKM). Disordered stretches follow at residues 148 to 216 (REQM…RPLS) and 228 to 276 (PSNG…QTKR). A compositionally biased stretch (pro residues) spans 235–268 (NPPPPPQVRSVTPPPPPRGQTPPPRGTTPPPPSW). Phosphothreonine is present on T246. A Phosphoserine modification is found at S278. 4 disordered regions span residues 292-317 (PPGA…SQAQ), 363-407 (PTGS…VPQS), 432-492 (WPQS…TPAP), and 513-630 (PTHP…ESRI). Residues 300 to 312 (YPPPPLTTSPMNP) show a composition bias toward pro residues. Positions 372 to 375 (PPPY) match the PPxY motif 1 motif. The segment covering 380–392 (ANGQSPSALQTGA) has biased composition (polar residues). The segment covering 433-445 (PQSSSAPAQSSPS) has biased composition (low complexity). Positions 453-481 (WQPNIPVRSNSFNNPLGSRASHSANSQPS) are enriched in polar residues. S463 carries the phosphoserine; by NUAK1 and NUAK2 modification. 2 stretches are compositionally biased toward low complexity: residues 482 to 492 (ATTVTAITPAP) and 520 to 530 (PQPVQTVQPTP). The interaction with YAP1 stretch occupies residues 525 to 654 (TVQPTPFSEG…HVENVLKSHQ (130 aa)). Residues 555–558 (PPPY) carry the PPxY motif 2 motif. A compositionally biased stretch (basic and acidic residues) spans 578 to 608 (PCKDEQPSLPKEDDSEKSADSGDSGDKEKKQ). At S612 the chain carries Phosphoserine. The segment covering 620 to 629 (KKDEERRESR) has biased composition (basic and acidic residues). A Phosphoserine modification is found at S673. The Protein kinase domain maps to 704–1009 (FVKIKTLGIG…ADEIKAHPFF (306 aa)). Residues 710–718 (LGIGAFGEV) and K733 each bind ATP. D827 functions as the Proton acceptor in the catalytic mechanism. Phosphoserine; by STK3/MST2 is present on S908. Residues 1010–1089 (KTIDFSSDLR…RRFFDDNGYP (80 aa)) enclose the AGC-kinase C-terminal domain. The residue at position 1078 (T1078) is a Phosphothreonine; by STK3/MST2. The segment at 1104-1129 (QGSEQQSDEDDQHTSSDGNNRDLVYV) is disordered.

The protein belongs to the protein kinase superfamily. AGC Ser/Thr protein kinase family. Complexes with CDK1 in early mitosis. LATS1-associated CDK1 has no mitotic cyclin partner and no apparent kinase activity. Binds phosphorylated ZYX, locating this protein to the mitotic spindle and suggesting a role for actin regulatory proteins during mitosis. Binds to and colocalizes with LIMK1 at the actomyosin contractile ring during cytokinesis. Interacts (via PPxY motif 2) with YAP1 (via WW domains). Interacts with MOB1A and MOB1B. Interacts with LIMD1, WTIP and AJUBA. Interacts with ESR1, DCAF1 and DCAF13; probably recruits DCAF1 and DCAF13 to ESR1 to promote ESR1 ubiquitination and ubiquitin-mediated proteasomal degradation. Interacts with STK3/MST2; this interaction is inhibited in the presence of DLG5. Interacts with SCRIB in the presence of DLG5. Interacts with WWTR1/TAZ. Interacts with WWC1, WWC2 and WWC3 (via their WW domains). Mg(2+) is required as a cofactor. Autophosphorylated and phosphorylated during M-phase of the cell cycle. Phosphorylated by STK3/MST2 at Ser-908 and Thr-1078, which results in its activation. Phosphorylated by MAP4Ks; in parallel to STK3/MST2 and resulting to its activation. Phosphorylation at Ser-463 by NUAK1 and NUAK2 leads to decreased protein level and is required to regulate cellular senescence and cellular ploidy.

The protein resides in the cytoplasm. It is found in the cytoskeleton. It localises to the microtubule organizing center. Its subcellular location is the centrosome. The protein localises to the spindle. The protein resides in the midbody. It is found in the spindle pole body. The enzyme catalyses L-seryl-[protein] + ATP = O-phospho-L-seryl-[protein] + ADP + H(+). The catalysed reaction is L-threonyl-[protein] + ATP = O-phospho-L-threonyl-[protein] + ADP + H(+). Negative regulator of YAP1 in the Hippo signaling pathway that plays a pivotal role in organ size control and tumor suppression by restricting proliferation and promoting apoptosis. The core of this pathway is composed of a kinase cascade wherein STK3/MST2 and STK4/MST1, in complex with its regulatory protein SAV1, phosphorylates and activates LATS1/2 in complex with its regulatory protein MOB1, which in turn phosphorylates and inactivates YAP1 oncoprotein and WWTR1/TAZ. Phosphorylation of YAP1 by LATS1 inhibits its translocation into the nucleus to regulate cellular genes important for cell proliferation, cell death, and cell migration. Acts as a tumor suppressor which plays a critical role in maintenance of ploidy through its actions in both mitotic progression and the G1 tetraploidy checkpoint. Negatively regulates G2/M transition by down-regulating CDK1 kinase activity. Involved in the control of p53 expression. Affects cytokinesis by regulating actin polymerization through negative modulation of LIMK1. May also play a role in endocrine function. Plays a role in mammary gland epithelial cell differentiation, both through the Hippo signaling pathway and the intracellular estrogen receptor signaling pathway by promoting the degradation of ESR1. Acts as an activator of the NLRP3 inflammasome by mediating phosphorylation of 'Ser-265' of NLRP3 following NLRP3 palmitoylation, promoting NLRP3 activation by NEK7. The chain is Serine/threonine-protein kinase LATS1 from Mus musculus (Mouse).